Here is a 314-residue protein sequence, read N- to C-terminus: WD repeat-containing protein 38 (314 aa).

WD repeat units follow at residues 19-58, 61-100, 103-142, 145-184, 190-228, 231-272, and 274-312; these read QHGG…LLWR, GHTG…CLRV, GHQR…MLRL, GHRD…PAVS, GHSA…LLIQ, GHVT…ETLK, and VLDV…PRDP. Residues 294-314 are disordered; it reads AADQTRRQISRTSKSPRDPQT.

This Homo sapiens (Human) protein is WD repeat-containing protein 38 (WDR38).